The primary structure comprises 481 residues: 5-hydroxytryptamine receptor 2B (481 aa).

Residues M1–W56 are Extracellular-facing. A glycan (N-linked (GlcNAc...) asparagine) is linked at N30. A helical transmembrane segment spans residues A57–V79. Topologically, residues S80 to N90 are cytoplasmic. Residues Y91–L113 form a helical membrane-spanning segment. The Extracellular portion of the chain corresponds to T114 to P129. C128 and C207 form a disulfide bridge. Residues A130–V151 traverse the membrane as a helical segment. Ergotamine-binding residues include D135 and T140. Residues D152–Y154 carry the DRY motif; important for ligand-induced conformation changes motif. The Cytoplasmic segment spans residues D152–T171. The helical transmembrane segment at A172 to I192 threads the bilayer. Topologically, residues K193–D216 are extracellular. L209 serves as a coordination point for ergotamine. A [DE]RFG motif; may stabilize a conformation that preferentially activates signaling via beta-arrestin family members motif is present at residues E212–G215. Residues F217–L239 traverse the membrane as a helical segment. The Cytoplasmic segment spans residues T240–K324. A helical transmembrane segment spans residues V325–I345. The Extracellular segment spans residues T346–M360. Residues C350 and C353 are joined by a disulfide bond. Residues L361–L382 form a helical membrane-spanning segment. The NPxxY motif; important for ligand-induced conformation changes and signaling signature appears at N376 to Y380. Residues F383–V481 lie on the Cytoplasmic side of the membrane. A lipid anchor (S-palmitoyl cysteine) is attached at C397. The PDZ-binding signature appears at S479–V481.

The protein belongs to the G-protein coupled receptor 1 family. As to quaternary structure, interacts (via C-terminus) with MPDZ. Ubiquitous. Detected in liver, kidney, heart, pulmonary artery, and intestine. Detected at lower levels in blood, placenta and brain, especially in cerebellum, occipital cortex and frontal cortex.

The protein resides in the cell membrane. It localises to the synapse. The protein localises to the synaptosome. G-protein coupled receptor for 5-hydroxytryptamine (serotonin). Also functions as a receptor for various ergot alkaloid derivatives and psychoactive substances. Ligand binding causes a conformation change that triggers signaling via guanine nucleotide-binding proteins (G proteins) and modulates the activity of downstream effectors. HTR2B is coupled to G(q)/G(11) G alpha proteins and activates phospholipase C-beta, releasing diacylglycerol (DAG) and inositol 1,4,5-trisphosphate (IP3) second messengers that modulate the activity of phosphatidylinositol 3-kinase and promote the release of Ca(2+) ions from intracellular stores, respectively. Beta-arrestin family members inhibit signaling via G proteins and mediate activation of alternative signaling pathways. Plays a role in the regulation of dopamine and 5-hydroxytryptamine release, 5-hydroxytryptamine uptake and in the regulation of extracellular dopamine and 5-hydroxytryptamine levels, and thereby affects neural activity. May play a role in the perception of pain. Plays a role in the regulation of behavior, including impulsive behavior. Required for normal proliferation of embryonic cardiac myocytes and normal heart development. Protects cardiomyocytes against apoptosis. Plays a role in the adaptation of pulmonary arteries to chronic hypoxia. Plays a role in vasoconstriction. Required for normal osteoblast function and proliferation, and for maintaining normal bone density. Required for normal proliferation of the interstitial cells of Cajal in the intestine. The chain is 5-hydroxytryptamine receptor 2B from Homo sapiens (Human).